Reading from the N-terminus, the 497-residue chain is Tripartite motif-containing protein 5 (497 aa).

Ala-2 is modified (N-acetylalanine). Residues 15–60 (CPICLELLTEPLSLPCGHSFCQACITANHRKSMLYKEGERSCPVCR) form an RING-type zinc finger. A Phosphoserine modification is found at Ser-87. A B box-type zinc finger spans residues 92–133 (LKVDHCARHGEKLLLFCQEDSKVICWLCERSQEHRGHHTFLM). Residues Cys-97, His-100, Cys-119, and His-125 each coordinate Zn(2+). A coiled-coil region spans residues 137-225 (AQEYHVKLQT…LTKSETEMVQ (89 aa)). The tract at residues 187-200 (FEQLREILDWEESN) is required for interaction with GABARAP and for autophagy. The B30.2/SPRY domain occupies 283–497 (LKGMLDMFRE…VPMTLCSPSS (215 aa)).

Belongs to the TRIM/RBCC family. As to quaternary structure, can form homodimers and homotrimers. In addition to lower-order dimerization, also exhibits a higher-order multimerization and both low- and high-order multimerizations are essential for its restriction activity. Interacts with BTBD1 and BTBD2. Interacts with PSMC4, PSMC5, PSMD7 and HSPA8/HSC70. Interacts (via B30.2/SPRY domain) with HSPA1A/B. Interacts with PSMC2, MAP3K7/TAK1, TAB2 and TAB3. Interacts with SQSTM1. Interacts with TRIM6 and TRIM34. Interacts with ULK1 (phosphorylated form), GABARAP, GABARAPL1, GABARAPL2, MAP1LC3A, MAP1LC3C and BECN1. In terms of processing, degraded in a proteasome-independent fashion in the absence of viral infection but in a proteasome-dependent fashion following exposure to restriction sensitive virus. Post-translationally, autoubiquitinated in a RING finger- and UBE2D2-dependent manner. Monoubiquitinated by TRIM21. Deubiquitinated by Yersinia YopJ. Ubiquitination may not lead to proteasomal degradation.

The protein resides in the cytoplasm. The protein localises to the nucleus. The catalysed reaction is S-ubiquitinyl-[E2 ubiquitin-conjugating enzyme]-L-cysteine + [acceptor protein]-L-lysine = [E2 ubiquitin-conjugating enzyme]-L-cysteine + N(6)-ubiquitinyl-[acceptor protein]-L-lysine.. It participates in protein modification; protein ubiquitination. Functionally, capsid-specific restriction factor that prevents infection from non-host-adapted retroviruses. Blocks viral replication early in the life cycle, after viral entry but before reverse transcription. In addition to acting as a capsid-specific restriction factor, also acts as a pattern recognition receptor that activates innate immune signaling in response to the retroviral capsid lattice. Binding to the viral capsid triggers its E3 ubiquitin ligase activity, and in concert with the heterodimeric ubiquitin conjugating enzyme complex UBE2V1-UBE2N (also known as UBC13-UEV1A complex) generates 'Lys-63'-linked polyubiquitin chains, which in turn are catalysts in the autophosphorylation of the MAP3K7/TAK1 complex (includes TAK1, TAB2, and TAB3). Activation of the MAP3K7/TAK1 complex by autophosphorylation results in the induction and expression of NF-kappa-B and MAPK-responsive inflammatory genes, thereby leading to an innate immune response in the infected cell. Plays a role in regulating autophagy through activation of autophagy regulator BECN1 by causing its dissociation from its inhibitors BCL2 and TAB2. In Papio anubis (Olive baboon), this protein is Tripartite motif-containing protein 5 (TRIM5).